The following is a 215-amino-acid chain: T-complex protein 10A homolog 1 (215 aa).

A disordered region spans residues 1 to 25 (MLAGQLEARDPKEGTHPEDPCPGAG). Residues 7–19 (EARDPKEGTHPED) show a composition bias toward basic and acidic residues. A coiled-coil region spans residues 69–110 (ADVHGKLRSHIDALREQNMELREKLRALQLQRWKARKKSAAS). The leucine-zipper stretch occupies residues 75 to 96 (LRSHIDALREQNMELREKLRAL). Positions 150-163 (ATLLGQRSSSNNSA) are enriched in polar residues. Residues 150–215 (ATLLGQRSSS…TPCAERRGGV (66 aa)) form a disordered region.

It belongs to the TCP10 family. In terms of assembly, self-associates (via leucine zipper). Interacts (via leucine zipper) with ZIPK/DAPK3 (via leucine zipper). Interacts with MAD4. As to expression, expressed in liver and testis. Expressed in the seminiferous tubules (at protein level).

Its subcellular location is the nucleus. In terms of biological role, may be involved in transcriptional regulation. Has in vitro transcription inhibition activity. Acts as a tumor suppressor in hepatocellular carcinoma (HCC) cells. The protein is T-complex protein 10A homolog 1 (TCP10L) of Homo sapiens (Human).